A 200-amino-acid chain; its full sequence is UPF0316 protein Mhun_0543 (200 aa).

3 consecutive transmembrane segments (helical) span residues 3–23 (VGFL…IFLA), 44–64 (FIAP…IGQV), and 71–91 (PICY…GMEL).

The protein belongs to the UPF0316 family.

Its subcellular location is the cell membrane. This is UPF0316 protein Mhun_0543 from Methanospirillum hungatei JF-1 (strain ATCC 27890 / DSM 864 / NBRC 100397 / JF-1).